The following is a 213-amino-acid chain: Ribosomal RNA large subunit methyltransferase E (213 aa).

Residues glycine 59, phenylalanine 61, aspartate 79, aspartate 97, and aspartate 121 each contribute to the S-adenosyl-L-methionine site. Residue lysine 161 is the Proton acceptor of the active site.

The protein belongs to the class I-like SAM-binding methyltransferase superfamily. RNA methyltransferase RlmE family.

It is found in the cytoplasm. The enzyme catalyses uridine(2552) in 23S rRNA + S-adenosyl-L-methionine = 2'-O-methyluridine(2552) in 23S rRNA + S-adenosyl-L-homocysteine + H(+). Functionally, specifically methylates the uridine in position 2552 of 23S rRNA at the 2'-O position of the ribose in the fully assembled 50S ribosomal subunit. In Myxococcus xanthus (strain DK1622), this protein is Ribosomal RNA large subunit methyltransferase E.